Here is a 171-residue protein sequence, read N- to C-terminus: UPF0312 protein SAR2769 (171 aa).

It belongs to the UPF0312 family.

This is UPF0312 protein SAR2769 from Staphylococcus aureus (strain MRSA252).